A 142-amino-acid chain; its full sequence is Nucleoside diphosphate kinase (142 aa).

The ATP site is built by Lys-11, Phe-59, Arg-87, Thr-93, Arg-104, and Asn-114. His-117 (pros-phosphohistidine intermediate) is an active-site residue.

The protein belongs to the NDK family. Homotetramer. Mg(2+) serves as cofactor.

It is found in the cytoplasm. It carries out the reaction a 2'-deoxyribonucleoside 5'-diphosphate + ATP = a 2'-deoxyribonucleoside 5'-triphosphate + ADP. It catalyses the reaction a ribonucleoside 5'-diphosphate + ATP = a ribonucleoside 5'-triphosphate + ADP. In terms of biological role, major role in the synthesis of nucleoside triphosphates other than ATP. The ATP gamma phosphate is transferred to the NDP beta phosphate via a ping-pong mechanism, using a phosphorylated active-site intermediate. The polypeptide is Nucleoside diphosphate kinase (Pectobacterium carotovorum subsp. carotovorum (strain PC1)).